The sequence spans 132 residues: Small ribosomal subunit protein uS8 (132 aa).

Belongs to the universal ribosomal protein uS8 family. In terms of assembly, part of the 30S ribosomal subunit. Contacts proteins S5 and S12.

Functionally, one of the primary rRNA binding proteins, it binds directly to 16S rRNA central domain where it helps coordinate assembly of the platform of the 30S subunit. The protein is Small ribosomal subunit protein uS8 of Anaeromyxobacter dehalogenans (strain 2CP-C).